We begin with the raw amino-acid sequence, 495 residues long: Aspartyl/glutamyl-tRNA(Asn/Gln) amidotransferase subunit B (495 aa).

The protein belongs to the GatB/GatE family. GatB subfamily. Heterotrimer of A, B and C subunits.

It carries out the reaction L-glutamyl-tRNA(Gln) + L-glutamine + ATP + H2O = L-glutaminyl-tRNA(Gln) + L-glutamate + ADP + phosphate + H(+). The catalysed reaction is L-aspartyl-tRNA(Asn) + L-glutamine + ATP + H2O = L-asparaginyl-tRNA(Asn) + L-glutamate + ADP + phosphate + 2 H(+). Its function is as follows. Allows the formation of correctly charged Asn-tRNA(Asn) or Gln-tRNA(Gln) through the transamidation of misacylated Asp-tRNA(Asn) or Glu-tRNA(Gln) in organisms which lack either or both of asparaginyl-tRNA or glutaminyl-tRNA synthetases. The reaction takes place in the presence of glutamine and ATP through an activated phospho-Asp-tRNA(Asn) or phospho-Glu-tRNA(Gln). The polypeptide is Aspartyl/glutamyl-tRNA(Asn/Gln) amidotransferase subunit B (Methylocella silvestris (strain DSM 15510 / CIP 108128 / LMG 27833 / NCIMB 13906 / BL2)).